The chain runs to 303 residues: Sulfate adenylyltransferase subunit 2 (303 aa).

This sequence belongs to the PAPS reductase family. CysD subfamily. Heterodimer composed of CysD, the smaller subunit, and CysN.

The enzyme catalyses sulfate + ATP + H(+) = adenosine 5'-phosphosulfate + diphosphate. It participates in sulfur metabolism; hydrogen sulfide biosynthesis; sulfite from sulfate: step 1/3. With CysN forms the ATP sulfurylase (ATPS) that catalyzes the adenylation of sulfate producing adenosine 5'-phosphosulfate (APS) and diphosphate, the first enzymatic step in sulfur assimilation pathway. APS synthesis involves the formation of a high-energy phosphoric-sulfuric acid anhydride bond driven by GTP hydrolysis by CysN coupled to ATP hydrolysis by CysD. In Sulfurovum sp. (strain NBC37-1), this protein is Sulfate adenylyltransferase subunit 2.